A 560-amino-acid polypeptide reads, in one-letter code: Glutamine--tRNA ligase (560 aa).

The 'HIGH' region signature appears at 36–46 (PEPNGFAHIGH). Residues 37–39 (EPN) and 43–49 (HIGHAKA) each bind ATP. The L-glutamine site is built by D69 and Y214. An ATP-binding site is contributed by 263–264 (RL). The short motif at 270–274 (LTSKR) is the 'KMSKS' region element.

Belongs to the class-I aminoacyl-tRNA synthetase family. As to quaternary structure, monomer.

It is found in the cytoplasm. The catalysed reaction is tRNA(Gln) + L-glutamine + ATP = L-glutaminyl-tRNA(Gln) + AMP + diphosphate. This is Glutamine--tRNA ligase from Chromobacterium violaceum (strain ATCC 12472 / DSM 30191 / JCM 1249 / CCUG 213 / NBRC 12614 / NCIMB 9131 / NCTC 9757 / MK).